The following is a 438-amino-acid chain: Putative truncated GMC-type inactive oxidoreductase L894 (438 aa).

A signal peptide spans 1–26; that stretch reads MYVFLLFSRYKIFYVYIKKMAHRSRC. 79 to 109 lines the FAD pocket; sequence DIVIIGAGAAGCVLAYYLTKFSDLKIILLEA.

Belongs to the GMC oxidoreductase family. It depends on FAD as a cofactor.

Its subcellular location is the virion. The chain is Putative truncated GMC-type inactive oxidoreductase L894 from Acanthamoeba polyphaga (Amoeba).